Here is a 384-residue protein sequence, read N- to C-terminus: Guanine nucleotide-binding protein alpha-1 subunit (384 aa).

Residues Met-1–Thr-22 form a disordered region. The N-myristoyl glycine moiety is linked to residue Gly-2. Cys-5 carries the S-palmitoyl cysteine lipid modification. Positions His-38–Leu-384 constitute a G-alpha domain. Residues Lys-41–Thr-54 form a G1 motif region. Residues Asp-49, Ser-50, Gly-51, Lys-52, Ser-53, Thr-54, Asp-163, Leu-188, Thr-194, Gly-222, Asn-288, Lys-289, Asp-291, and Ala-356 each contribute to the GTP site. Mg(2+) is bound at residue Ser-53. The interval Asp-186–Thr-194 is G2 motif. Thr-194 is a binding site for Mg(2+). A G3 motif region spans residues Tyr-215–Arg-224. The segment at Met-284–Asp-291 is G4 motif. The segment at Thr-354–Gln-359 is G5 motif.

Belongs to the G-alpha family. In terms of assembly, g proteins are composed of 3 units; alpha, beta and gamma. The alpha chain contains the guanine nucleotide binding site. Mg(2+) serves as cofactor.

In terms of biological role, guanine nucleotide-binding proteins (G proteins) are involved as modulators or transducers in various transmembrane signaling systems. The chain is Guanine nucleotide-binding protein alpha-1 subunit (GPA1) from Solanum tuberosum (Potato).